A 212-amino-acid chain; its full sequence is Outer-membrane lipoprotein carrier protein (212 aa).

The first 29 residues, 1–29, serve as a signal peptide directing secretion; that stretch reads MSSARRRALGFSFQALLLCAAGWHGAAQA.

The protein belongs to the LolA family. Monomer.

The protein localises to the periplasm. Its function is as follows. Participates in the translocation of lipoproteins from the inner membrane to the outer membrane. Only forms a complex with a lipoprotein if the residue after the N-terminal Cys is not an aspartate (The Asp acts as a targeting signal to indicate that the lipoprotein should stay in the inner membrane). The chain is Outer-membrane lipoprotein carrier protein from Leptothrix cholodnii (strain ATCC 51168 / LMG 8142 / SP-6) (Leptothrix discophora (strain SP-6)).